A 206-amino-acid chain; its full sequence is GTP cyclohydrolase 1 (206 aa).

C95, H98, and C166 together coordinate Zn(2+).

The protein belongs to the GTP cyclohydrolase I family. Toroid-shaped homodecamer, composed of two pentamers of five dimers.

The catalysed reaction is GTP + H2O = 7,8-dihydroneopterin 3'-triphosphate + formate + H(+). It participates in cofactor biosynthesis; 7,8-dihydroneopterin triphosphate biosynthesis; 7,8-dihydroneopterin triphosphate from GTP: step 1/1. This is GTP cyclohydrolase 1 from Bartonella bacilliformis (strain ATCC 35685 / KC583 / Herrer 020/F12,63).